A 272-amino-acid polypeptide reads, in one-letter code: HMP-PP phosphatase (272 aa).

D8 (nucleophile) is an active-site residue. Mg(2+) contacts are provided by D8, D10, and D212.

Belongs to the HAD-like hydrolase superfamily. Cof family. Mg(2+) serves as cofactor.

It catalyses the reaction 4-amino-2-methyl-5-(diphosphooxymethyl)pyrimidine + H2O = 4-amino-2-methyl-5-(phosphooxymethyl)pyrimidine + phosphate + H(+). Functionally, catalyzes the hydrolysis of 4-amino-2-methyl-5-hydroxymethylpyrimidine pyrophosphate (HMP-PP) to 4-amino-2-methyl-5-hydroxymethylpyrimidine phosphate (HMP-P). The polypeptide is HMP-PP phosphatase (Salmonella enteritidis PT4 (strain P125109)).